A 186-amino-acid chain; its full sequence is ATP synthase subunit b 3 (186 aa).

Residues 5–25 (LLPALLTFSATPALAAKGPFF) form a helical membrane-spanning segment.

The protein belongs to the ATPase B chain family. As to quaternary structure, F-type ATPases have 2 components, F(1) - the catalytic core - and F(0) - the membrane proton channel. F(1) has five subunits: alpha(3), beta(3), gamma(1), delta(1), epsilon(1). F(0) has three main subunits: a(1), b(2) and c(10-14). The alpha and beta chains form an alternating ring which encloses part of the gamma chain. F(1) is attached to F(0) by a central stalk formed by the gamma and epsilon chains, while a peripheral stalk is formed by the delta and b chains.

It is found in the cell inner membrane. Its function is as follows. F(1)F(0) ATP synthase produces ATP from ADP in the presence of a proton or sodium gradient. F-type ATPases consist of two structural domains, F(1) containing the extramembraneous catalytic core and F(0) containing the membrane proton channel, linked together by a central stalk and a peripheral stalk. During catalysis, ATP synthesis in the catalytic domain of F(1) is coupled via a rotary mechanism of the central stalk subunits to proton translocation. Functionally, component of the F(0) channel, it forms part of the peripheral stalk, linking F(1) to F(0). The chain is ATP synthase subunit b 3 from Dinoroseobacter shibae (strain DSM 16493 / NCIMB 14021 / DFL 12).